Here is a 402-residue protein sequence, read N- to C-terminus: Argininosuccinate synthase (402 aa).

Residue 9-17 participates in ATP binding; it reads AYSGGLDTS. L-citrulline is bound at residue tyrosine 86. Glycine 116 is a binding site for ATP. L-aspartate contacts are provided by threonine 118, asparagine 122, and aspartate 123. Asparagine 122 serves as a coordination point for L-citrulline. Positions 126, 174, 183, 259, and 271 each coordinate L-citrulline.

The protein belongs to the argininosuccinate synthase family. Type 1 subfamily. In terms of assembly, homotetramer.

It is found in the cytoplasm. It catalyses the reaction L-citrulline + L-aspartate + ATP = 2-(N(omega)-L-arginino)succinate + AMP + diphosphate + H(+). The protein operates within amino-acid biosynthesis; L-arginine biosynthesis; L-arginine from L-ornithine and carbamoyl phosphate: step 2/3. The sequence is that of Argininosuccinate synthase from Geobacillus sp. (strain WCH70).